Consider the following 217-residue polypeptide: FGFR1 oncogene partner 2 homolog (217 aa).

Coiled-coil stretches lie at residues 6-106 (TIEK…MSKY) and 163-188 (KEQE…TRES). Residues 194–217 (KEDASESTSLSGLVTSSDLSLRKS) form a disordered region. The segment covering 199 to 217 (ESTSLSGLVTSSDLSLRKS) has biased composition (polar residues).

The protein belongs to the SIKE family.

Its subcellular location is the cytoplasm. This Gallus gallus (Chicken) protein is FGFR1 oncogene partner 2 homolog (FGFR1OP2).